Reading from the N-terminus, the 460-residue chain is Phosphoglucomutase (460 aa).

Ser-103 functions as the Phosphoserine intermediate in the catalytic mechanism. Ser-103 contacts Mg(2+). Residues 103–104 (SH) and Lys-113 contribute to the substrate site. Residues Asp-239, Asp-241, and Asp-243 each coordinate Mg(2+). Substrate contacts are provided by residues 243–244 (DR), Thr-303, and 322–324 (EMS).

It belongs to the phosphohexose mutase family. The cofactor is Mg(2+).

The protein localises to the cytoplasm. It carries out the reaction alpha-D-glucose 1-phosphate = alpha-D-glucose 6-phosphate. In terms of biological role, this enzyme participates in both the breakdown and synthesis of glucose. The sequence is that of Phosphoglucomutase (pgm) from Neisseria meningitidis serogroup A / serotype 4A (strain DSM 15465 / Z2491).